A 230-amino-acid chain; its full sequence is Transcription factor bHLH147 (230 aa).

Positions 1–17 (MESISPVSNQLLQPTTT) are enriched in polar residues. Residues 1-52 (MESISPVSNQLLQPTTTSSNSDRSRRKRKKKSSPSSVEKSPSPSISLEKWRS) are disordered. A compositionally biased stretch (low complexity) spans 33–46 (SPSSVEKSPSPSIS). In terms of domain architecture, bHLH spans 147-196 (KQRATVLRLKAKGLPAVQRKVKVLSRLVPGCRKQSLPVVLEETTDYIAAM). The disordered stretch occupies residues 210–230 (VSSSPPPPTPGHEGGQTHMLG).

Homodimer. Interacts with PRE3.

The protein resides in the nucleus. Its function is as follows. Atypical bHLH transcription factor probably unable to bind DNA. Negatively regulates brassinosteroid signaling. The protein is Transcription factor bHLH147 (BHLH147) of Arabidopsis thaliana (Mouse-ear cress).